The sequence spans 407 residues: tRNA(Ile)-lysidine synthase (407 aa).

36 to 41 (SGGRDS) lines the ATP pocket.

The protein belongs to the tRNA(Ile)-lysidine synthase family.

It is found in the cytoplasm. The enzyme catalyses cytidine(34) in tRNA(Ile2) + L-lysine + ATP = lysidine(34) in tRNA(Ile2) + AMP + diphosphate + H(+). Functionally, ligates lysine onto the cytidine present at position 34 of the AUA codon-specific tRNA(Ile) that contains the anticodon CAU, in an ATP-dependent manner. Cytidine is converted to lysidine, thus changing the amino acid specificity of the tRNA from methionine to isoleucine. This chain is tRNA(Ile)-lysidine synthase, found in Tropheryma whipplei (strain TW08/27) (Whipple's bacillus).